We begin with the raw amino-acid sequence, 373 residues long: Protein MGF 360-6L (373 aa).

Belongs to the asfivirus MGF 360 family.

Plays a role in virus cell tropism, and may be required for efficient virus replication in macrophages. This Ornithodoros (relapsing fever ticks) protein is Protein MGF 360-6L.